The chain runs to 162 residues: Protein cornichon homolog 2 (162 aa).

The Cytoplasmic segment spans residues methionine 1–tyrosine 10. A helical transmembrane segment spans residues methionine 11–phenylalanine 31. Topologically, residues aspartate 32–tyrosine 72 are lumenal. The helical transmembrane segment at cysteine 73–leucine 93 threads the bilayer. The Cytoplasmic portion of the chain corresponds to asparagine 94–lysine 138. A helical membrane pass occupies residues leucine 139–serine 161. Alanine 162 is a topological domain (lumenal).

It belongs to the cornichon family.

It localises to the membrane. Regulates the trafficking and gating properties of AMPA-selective glutamate receptors (AMPARs). The chain is Protein cornichon homolog 2 (cnih2) from Xenopus laevis (African clawed frog).